A 715-amino-acid chain; its full sequence is Fatty acid oxidation complex subunit alpha (715 aa).

The interval 1–190 is enoyl-CoA hydratase; sequence MTTTSAFMLN…RAGLVDDVVP (190 aa). The tract at residues 306-715 is 3-hydroxyacyl-CoA dehydrogenase; sequence GPLNSVGILG…WTNGETDQGN (410 aa).

It in the N-terminal section; belongs to the enoyl-CoA hydratase/isomerase family. In the central section; belongs to the 3-hydroxyacyl-CoA dehydrogenase family. In terms of assembly, heterotetramer of two alpha chains (FadJ) and two beta chains (FadI).

Its subcellular location is the cytoplasm. It carries out the reaction a (3S)-3-hydroxyacyl-CoA = a (2E)-enoyl-CoA + H2O. The catalysed reaction is a 4-saturated-(3S)-3-hydroxyacyl-CoA = a (3E)-enoyl-CoA + H2O. The enzyme catalyses a (3S)-3-hydroxyacyl-CoA + NAD(+) = a 3-oxoacyl-CoA + NADH + H(+). It catalyses the reaction (3S)-3-hydroxybutanoyl-CoA = (3R)-3-hydroxybutanoyl-CoA. Its pathway is lipid metabolism; fatty acid beta-oxidation. In terms of biological role, catalyzes the formation of a hydroxyacyl-CoA by addition of water on enoyl-CoA. Also exhibits 3-hydroxyacyl-CoA epimerase and 3-hydroxyacyl-CoA dehydrogenase activities. The sequence is that of Fatty acid oxidation complex subunit alpha from Salmonella schwarzengrund (strain CVM19633).